Here is a 561-residue protein sequence, read N- to C-terminus: 4-coumarate--CoA ligase 1 (561 aa).

ATP-binding residues include S210, S211, G212, T213, T214, and K218. The (E)-4-coumaroyl-AMP site is built by Y260 and S264. Residue K281 coordinates CoA. The tract at residues 283–352 is SBD1; sequence EINLLLELIQ…AKFPNAKLGQ (70 aa). (E)-4-coumaroyl-AMP-binding residues include A330, Q352, G353, T357, and M365. Residues Q352, G353, and T357 each contribute to the ATP site. Positions 353–420 are SBD2; it reads GYGMTEAGPV…IRGHQIMKGY (68 aa). Positions 441 and 456 each coordinate ATP. The (E)-4-coumaroyl-AMP site is built by K458 and K462. Residues K464 and G465 each coordinate CoA. Residue K547 coordinates ATP.

This sequence belongs to the ATP-dependent AMP-binding enzyme family. It depends on Mg(2+) as a cofactor. Preferentially expressed in roots, bolting stems and siliques. Also detected in leaves.

It catalyses the reaction (E)-4-coumarate + ATP + CoA = (E)-4-coumaroyl-CoA + AMP + diphosphate. The enzyme catalyses (E)-caffeate + ATP + CoA = (E)-caffeoyl-CoA + AMP + diphosphate. The catalysed reaction is (E)-ferulate + ATP + CoA = (E)-feruloyl-CoA + AMP + diphosphate. It carries out the reaction (E)-4-coumarate + ATP + H(+) = (E)-4-coumaroyl-AMP + diphosphate. It catalyses the reaction (E)-4-coumaroyl-AMP + CoA = (E)-4-coumaroyl-CoA + AMP + H(+). The enzyme catalyses (E)-caffeate + ATP + H(+) = (E)-caffeoyl-AMP + diphosphate. The catalysed reaction is (E)-caffeoyl-AMP + CoA = (E)-caffeoyl-CoA + AMP + H(+). It carries out the reaction (E)-ferulate + ATP + H(+) = (E)-feruloyl-AMP + diphosphate. It catalyses the reaction (E)-feruloyl-AMP + CoA = (E)-feruloyl-CoA + AMP + H(+). It functions in the pathway phytoalexin biosynthesis; 3,4',5-trihydroxystilbene biosynthesis; 3,4',5-trihydroxystilbene from trans-4-coumarate: step 1/2. In terms of biological role, produces CoA thioesters of a variety of hydroxy- and methoxy-substituted cinnamic acids, which are used to synthesize several phenylpropanoid-derived compounds, including anthocyanins, flavonoids, isoflavonoids, coumarins, lignin, suberin and wall-bound phenolics. Follows a two-step reaction mechanism, wherein the carboxylate substrate first undergoes adenylation by ATP, followed by a thioesterification in the presence of CoA to yield the final CoA thioesters. The polypeptide is 4-coumarate--CoA ligase 1 (Arabidopsis thaliana (Mouse-ear cress)).